The chain runs to 464 residues: Fumarate hydratase class II (464 aa).

Substrate is bound by residues 98–100, 129–132, 139–141, and Thr187; these read SGT, HPND, and SSN. The Proton donor/acceptor role is filled by His188. Ser318 is an active-site residue. Residues Ser319 and 324 to 326 contribute to the substrate site; that span reads KVN.

It belongs to the class-II fumarase/aspartase family. Fumarase subfamily. In terms of assembly, homotetramer.

The protein resides in the cytoplasm. It carries out the reaction (S)-malate = fumarate + H2O. The protein operates within carbohydrate metabolism; tricarboxylic acid cycle; (S)-malate from fumarate: step 1/1. Involved in the TCA cycle. Catalyzes the stereospecific interconversion of fumarate to L-malate. This Pasteurella multocida (strain Pm70) protein is Fumarate hydratase class II.